A 342-amino-acid chain; its full sequence is Manganese-dependent ADP-ribose/CDP-alcohol diphosphatase (342 aa).

Zn(2+) contacts are provided by aspartate 18, glutamine 20, aspartate 67, asparagine 103, histidine 239, histidine 276, and histidine 278.

Belongs to the ADPRibase-Mn family. In terms of assembly, monomer. Mg(2+) is required as a cofactor.

The catalysed reaction is CDP-choline + H2O = phosphocholine + CMP + 2 H(+). The enzyme catalyses ADP-D-ribose + H2O = D-ribose 5-phosphate + AMP + 2 H(+). It catalyses the reaction CDP-glycerol + H2O = sn-glycerol 3-phosphate + CMP + 2 H(+). Hydrolyzes ADP-ribose, IDP-ribose, CDP-glycerol, CDP-choline and CDP-ethanolamine, but not other non-reducing ADP-sugars or CDP-glucose. The sequence is that of Manganese-dependent ADP-ribose/CDP-alcohol diphosphatase (adprm) from Xenopus tropicalis (Western clawed frog).